The primary structure comprises 352 residues: Sperm equatorial segment protein 1 (352 aa).

The first 19 residues, Met1–Ala19, serve as a signal peptide directing secretion. Asn128 carries an N-linked (GlcNAc...) asparagine glycan. Residues Ile140 to Ser203 form a disordered region. Residues Thr166–Ser193 show a composition bias toward polar residues.

The protein belongs to the SPESP1 family. Post-translationally, glycosylated. In testis there are two predominant forms of 77- and 67-kDa and a form of 47-kDa, whereas in epididymal sperm from caput, corpus, and cauda there are two forms of 47- and 43-kDa. Testis forms contain complex carbohydrate residues. Epididymal sperm forms are N-glycosylated. Then undergoes significant glycosylation in the testis and that the majority of these glycoconjugates are removed by the time sperm reach the caput epididymis.

The protein localises to the cytoplasmic vesicle. The protein resides in the secretory vesicle. Its subcellular location is the acrosome. Functionally, involved in fertilization ability of sperm. This Macaca fascicularis (Crab-eating macaque) protein is Sperm equatorial segment protein 1.